A 231-amino-acid polypeptide reads, in one-letter code: Orotate phosphoribosyltransferase (231 aa).

Lys-29 is a 5-phospho-alpha-D-ribose 1-diphosphate binding site. 37 to 38 (FF) contributes to the orotate binding site. Residues 75–76 (YK), Arg-107, Lys-108, Lys-111, His-113, and 133–141 (DDVISRCTA) each bind 5-phospho-alpha-D-ribose 1-diphosphate. 2 residues coordinate orotate: Ser-137 and Arg-165.

This sequence belongs to the purine/pyrimidine phosphoribosyltransferase family. PyrE subfamily. In terms of assembly, homodimer.

The enzyme catalyses orotidine 5'-phosphate + diphosphate = orotate + 5-phospho-alpha-D-ribose 1-diphosphate. It participates in pyrimidine metabolism; UMP biosynthesis via de novo pathway; UMP from orotate: step 1/2. Functionally, catalyzes the transfer of a ribosyl phosphate group from 5-phosphoribose 1-diphosphate to orotate, leading to the formation of orotidine monophosphate (OMP). In Podospora anserina (Pleurage anserina), this protein is Orotate phosphoribosyltransferase (URA5).